The following is a 111-amino-acid chain: Prothymosin alpha (111 aa).

An N-acetylmethionine modification is found at M1. Residues 1 to 111 (MSDAAVDTSS…TKKQKTEEDD (111 aa)) are disordered. N-acetylserine; in Prothymosin alpha, N-terminally processed is present on S2. S2 carries the post-translational modification Phosphoserine. The residue at position 8 (T8) is a Phosphothreonine. Phosphoserine is present on residues S9 and S10. 2 positions are modified to phosphothreonine: T13 and T14. Positions 13-31 (TTKDLKEKKEVVEEAENGR) are enriched in basic and acidic residues. N6-acetyllysine; alternate is present on K15. N6-succinyllysine; alternate is present on K15. The span at 43-84 (ENGEQEADNEVDEEEEEGGEEEEEEEEGDGEEEDGDEDEEAE) shows a compositional bias: acidic residues. The span at 101 to 111 (DTKKQKTEEDD) shows a compositional bias: basic and acidic residues. T102 carries the post-translational modification Phosphothreonine. An N6-acetyllysine; alternate modification is found at K103. K103 participates in a covalent cross-link: Glycyl lysine isopeptide (Lys-Gly) (interchain with G-Cter in SUMO2); alternate. T107 is subject to Phosphothreonine.

This sequence belongs to the pro/parathymosin family. As to quaternary structure, interacts with NUPR1; regulates apoptotic process. Post-translationally, covalently linked to a small RNA of about 20 nucleotides.

Its subcellular location is the nucleus. Functionally, prothymosin alpha may mediate immune function by conferring resistance to certain opportunistic infections. In Mus musculus (Mouse), this protein is Prothymosin alpha (Ptma).